We begin with the raw amino-acid sequence, 423 residues long: Endochitinase 42 (423 aa).

The signal sequence occupies residues 1 to 22 (MLSFLGKSVALLAALQATLSSP). Residues 23–34 (KPGHRRASVEKR) constitute a propeptide that is removed on maturation. Residues 38 to 401 (YANSVYFTNW…GTSHRALGGL (364 aa)) enclose the GH18 domain. Chitin is bound by residues 102 to 103 (GT) and 129 to 132 (GGWT). Glu171 functions as the Proton donor in the catalytic mechanism. Tyr172 is a chitin binding site. Residue Asn218 is glycosylated (N-linked (GlcNAc...) asparagine). Residues 237-240 (MAYD) and Trp378 each bind chitin.

It belongs to the glycosyl hydrolase 18 family. Chitinase class V subfamily.

Its subcellular location is the secreted. It catalyses the reaction Random endo-hydrolysis of N-acetyl-beta-D-glucosaminide (1-&gt;4)-beta-linkages in chitin and chitodextrins.. Functionally, secreted chitinase involved in the degradation of chitin, a component of the cell walls of fungi and exoskeletal elements of some animals (including worms and arthropods). Plays a morphogenetic role during apical growth, cell division and differentiation (cell wall morphogenesis). Also acts as an antifungal agent. Involved in the degradation and further assimilation of phytopathogenic fungi, namely mycoparasitism, the major mechanism accounting for the antagonistic activity against phytopathogenic fungi displayed by Trichoderma. The sequence is that of Endochitinase 42 (chit42) from Trichoderma harzianum (Hypocrea lixii).